Here is a 252-residue protein sequence, read N- to C-terminus: Triosephosphate isomerase (252 aa).

Substrate is bound at residue 10–12 (NWK). Histidine 96 functions as the Electrophile in the catalytic mechanism. Glutamate 168 acts as the Proton acceptor in catalysis. Substrate is bound by residues glycine 174, serine 214, and 235 to 236 (GG).

The protein belongs to the triosephosphate isomerase family. In terms of assembly, homodimer.

The protein resides in the cytoplasm. It carries out the reaction D-glyceraldehyde 3-phosphate = dihydroxyacetone phosphate. It participates in carbohydrate biosynthesis; gluconeogenesis. The protein operates within carbohydrate degradation; glycolysis; D-glyceraldehyde 3-phosphate from glycerone phosphate: step 1/1. In terms of biological role, involved in the gluconeogenesis. Catalyzes stereospecifically the conversion of dihydroxyacetone phosphate (DHAP) to D-glyceraldehyde-3-phosphate (G3P). The protein is Triosephosphate isomerase of Streptococcus agalactiae serotype Ia (strain ATCC 27591 / A909 / CDC SS700).